We begin with the raw amino-acid sequence, 172 residues long: Adenine phosphoribosyltransferase (172 aa).

It belongs to the purine/pyrimidine phosphoribosyltransferase family. As to quaternary structure, homodimer.

It is found in the cytoplasm. The catalysed reaction is AMP + diphosphate = 5-phospho-alpha-D-ribose 1-diphosphate + adenine. The protein operates within purine metabolism; AMP biosynthesis via salvage pathway; AMP from adenine: step 1/1. In terms of biological role, catalyzes a salvage reaction resulting in the formation of AMP, that is energically less costly than de novo synthesis. The sequence is that of Adenine phosphoribosyltransferase from Clostridium novyi (strain NT).